A 72-amino-acid polypeptide reads, in one-letter code: MWLLKRIVIFPIWVYQVALAPYLTPCCRFQPTCSAYAHEAINKHGIVKGIWLAGKRILRCHPCGKSGYDPVQ.

It belongs to the UPF0161 family.

It is found in the cell inner membrane. In terms of biological role, could be involved in insertion of integral membrane proteins into the membrane. In Amoebophilus asiaticus (strain 5a2), this protein is Putative membrane protein insertion efficiency factor.